Here is a 341-residue protein sequence, read N- to C-terminus: Putative gustatory receptor 9a (341 aa).

Position 1 (methionine 1) is a topological domain, cytoplasmic. The chain crosses the membrane as a helical span at residues 2–22 (SLWLEHFLTGYFQLCGLVCGW). Topologically, residues 23–30 (SGSRLGRL) are extracellular. The helical transmembrane segment at 31-51 (LSSTFLVLILIELVGEIETYF) threads the bilayer. Residues 52–68 (TEENPDNESVPAYFAKV) lie on the Cytoplasmic side of the membrane. Residues 69–89 (IMGVNMAYKMIHAWIALSALF) form a helical membrane-spanning segment. Residues 90 to 113 (ECRRFRYLLEELPPVKATSFIYRH) are Extracellular-facing. The chain crosses the membrane as a helical span at residues 114 to 134 (LILEIILFACNAFLVLSEYTI). Residues 135 to 202 (RGIYLENLRY…LAKVTRSLSH (68 aa)) are Cytoplasmic-facing. Residues 203-223 (LFGLSLLLLNVLCLGDWIIVC) traverse the membrane as a helical segment. Residues 224–233 (NVYFMVAYLQ) lie on the Extracellular side of the membrane. Residues 234–254 (VLPATLFLFGQVMFVVCPTLI) form a helical membrane-spanning segment. Over 255–318 (KIWSICAASH…GIYHLNLQTL (64 aa)) the chain is Cytoplasmic. A helical transmembrane segment spans residues 319 to 339 (AGMFFFILEALVIFLQFVSLV). The Extracellular segment spans residues 340–341 (RT).

This sequence belongs to the insect chemoreceptor superfamily. Gustatory receptor (GR) family. Gr2a subfamily. Expressed in neurons of the terminal external chemosensory organ of larvae.

It is found in the cell membrane. Its function is as follows. Probable gustatory receptor which mediates acceptance or avoidance behavior, depending on its substrates. The sequence is that of Putative gustatory receptor 9a (Gr9a) from Drosophila melanogaster (Fruit fly).